A 340-amino-acid polypeptide reads, in one-letter code: Probable allantoicase (340 aa).

It belongs to the allantoicase family.

The enzyme catalyses allantoate + H2O = (S)-ureidoglycolate + urea. It functions in the pathway nitrogen metabolism; (S)-allantoin degradation; (S)-ureidoglycolate from allantoate (aminidohydrolase route): step 1/1. This is Probable allantoicase from Rhizobium meliloti (strain 1021) (Ensifer meliloti).